A 971-amino-acid polypeptide reads, in one-letter code: Translation initiation factor IF-2 (971 aa).

Basic and acidic residues predominate over residues 49-63 (HLRKSHGATDGDKRK). Disordered regions lie at residues 49 to 85 (HLRK…KART) and 99 to 386 (RDDV…PTEP). Residues 105-114 (GAEQGQAQVA) show a composition bias toward low complexity. The span at 121-181 (ELKRREEEAR…EEEAAAKRAA (61 aa)) shows a compositional bias: basic and acidic residues. The span at 182 to 200 (AEAAAAQQAAAQQAAAEQE) shows a compositional bias: low complexity. The span at 209 to 260 (DEARAAAERAAQREAAKKAEDAAREAADKARAEQEEISKRRAAAEAEARAIR) shows a compositional bias: basic and acidic residues. Over residues 303–325 (ARPAVKKPAGAAAPATTQAPAGA) the composition is skewed to low complexity. A compositionally biased stretch (gly residues) spans 355–368 (SSGGVDRGWRGGPK). The 170-residue stretch at 471–640 (PRPPVVTVMG…LLQAEVLELK (170 aa)) folds into the tr-type G domain. Residues 480 to 487 (GHVDHGKT) form a G1 region. A GTP-binding site is contributed by 480 to 487 (GHVDHGKT). Residues 505-509 (GITQH) are G2. The tract at residues 526 to 529 (DTPG) is G3. GTP-binding positions include 526–530 (DTPGH) and 580–583 (NKID). A G4 region spans residues 580–583 (NKID). A G5 region spans residues 616-618 (SAK).

It belongs to the TRAFAC class translation factor GTPase superfamily. Classic translation factor GTPase family. IF-2 subfamily.

The protein localises to the cytoplasm. Functionally, one of the essential components for the initiation of protein synthesis. Protects formylmethionyl-tRNA from spontaneous hydrolysis and promotes its binding to the 30S ribosomal subunits. Also involved in the hydrolysis of GTP during the formation of the 70S ribosomal complex. The chain is Translation initiation factor IF-2 from Burkholderia cenocepacia (strain ATCC BAA-245 / DSM 16553 / LMG 16656 / NCTC 13227 / J2315 / CF5610) (Burkholderia cepacia (strain J2315)).